Consider the following 29-residue polypeptide: Cycloviolacin-O15 (29 aa).

Residues 1-29 constitute a cross-link (cyclopeptide (Gly-Asn)); it reads GLVPCGETCFTGKCYTPGCSCSYPICKKN. 3 cysteine pairs are disulfide-bonded: Cys5/Cys19, Cys9/Cys21, and Cys14/Cys26.

Post-translationally, this is a cyclic peptide.

Probably participates in a plant defense mechanism. Has hemolytic activity. The sequence is that of Cycloviolacin-O15 from Viola odorata (Sweet violet).